A 266-amino-acid polypeptide reads, in one-letter code: Urease accessory protein UreD (266 aa).

This sequence belongs to the UreD family. In terms of assembly, ureD, UreF and UreG form a complex that acts as a GTP-hydrolysis-dependent molecular chaperone, activating the urease apoprotein by helping to assemble the nickel containing metallocenter of UreC. The UreE protein probably delivers the nickel.

Its subcellular location is the cytoplasm. Required for maturation of urease via the functional incorporation of the urease nickel metallocenter. The chain is Urease accessory protein UreD from Jannaschia sp. (strain CCS1).